Reading from the N-terminus, the 451-residue chain is Ribonuclease J (451 aa).

H84, H86, D88, H89, H155, and D177 together coordinate Zn(2+). 384-388 (HVSGH) is a binding site for substrate. H410 is a Zn(2+) binding site.

It belongs to the metallo-beta-lactamase superfamily. RNA-metabolizing metallo-beta-lactamase-like family. Archaeal RNase J subfamily. As to quaternary structure, homodimer. Zn(2+) serves as cofactor.

The protein resides in the cytoplasm. Its activity is regulated as follows. Inhibited by 1,10-phenanthroline. In terms of biological role, a highly processive 5'-3' exoribonuclease; no evidence has been seen for endonuclease activity. Prefers 5'-phosphate or 5'-hydroxyl ends; 5'-triphosphate substrates are very poorly degraded, does not degrade circular RNA. Does not degrade pre-tRNA(Trp) suggesting it is inhibited by strong secondary structures. Also degrades ssNDA but not dsDNA. The polypeptide is Ribonuclease J (Pyrococcus abyssi (strain GE5 / Orsay)).